Reading from the N-terminus, the 511-residue chain is MDNYTVLRVIGQGSFGRALLVLQESSNQTFAMKEIRLLKSDTQTSRKEAVLLAKMKHPNIVAFKESFEAEGYLYIVMEYCDGGDLMQRIKQQKGKLFPEDTILNWFIQICLGVNHIHKRRVLHRDIKSKNVFLTHNGKVKLGDFGSARLLSSPMAFACTYVGTPYYVPPEIWENLPYNNKSDIWSLGCILYELCALKHPFQANSWKNLILKICQGPIHPLPALYSCKLQGLVKQMLKRNPSHRPSATTLLCRGSLAPLVPKCLPPQIIREYGEQILDEIKISTPKNMKKQDSNRVRRALGEANSASMQEEERGRKCSHTELESTGTTPAGNALERAARGNPESGNPQEHGRHTSPASPHRPWWERHGPSSNVEALEKASILTSSFTAEDDRGGSVIKYEENARRQWVREPPEALLSMLKDADLSQAFQTYTIYRPGAEGFLKGPLSEDTASDSVDGDLDSVMLDPERFEPRLDEEDTDFEEDNENPDWVSELKKHVGYGDGPGGQLLGERA.

N-acetylmethionine is present on Met1. The segment at 1–282 (MDNYTVLRVI…EQILDEIKIS (282 aa)) is interaction with VAV2. One can recognise a Protein kinase domain in the interval 4–255 (YTVLRVIGQG…ATTLLCRGSL (252 aa)). ATP contacts are provided by residues 10–18 (IGQGSFGRA) and Lys33. Asp125 (proton acceptor) is an active-site residue. Thr159 is modified (phosphothreonine; by autocatalysis). Disordered regions lie at residues 299 to 370 (LGEA…GPSS) and 443 to 511 (GPLS…GERA). A compositionally biased stretch (basic and acidic residues) spans 309–321 (EEERGRKCSHTEL). Residues 472-485 (LDEEDTDFEEDNEN) are compositionally biased toward acidic residues. Position 477 is a phosphothreonine (Thr477). Residues 498–511 (YGDGPGGQLLGERA) are compositionally biased toward gly residues.

The protein belongs to the protein kinase superfamily. NEK Ser/Thr protein kinase family. NIMA subfamily. As to quaternary structure, interacts with PXN, PRLR, VAV1 and VAV2 and this interaction is prolactin-dependent. Mg(2+) serves as cofactor. Post-translationally, phosphorylation at Thr-477 regulates its catalytic activity. As to expression, brain.

It is found in the cytoplasm. Its subcellular location is the cell projection. It localises to the axon. It carries out the reaction L-seryl-[protein] + ATP = O-phospho-L-seryl-[protein] + ADP + H(+). It catalyses the reaction L-threonyl-[protein] + ATP = O-phospho-L-threonyl-[protein] + ADP + H(+). Functionally, protein kinase which influences neuronal morphogenesis and polarity through effects on microtubules. Regulates microtubule acetylation in neurons. Contributes to prolactin-mediated phosphorylation of PXN and VAV2. This Mus musculus (Mouse) protein is Serine/threonine-protein kinase Nek3 (Nek3).